The sequence spans 50 residues: Temporin-SHa (50 aa).

A signal peptide spans 1–10 (FLGTINLSLC). A propeptide spanning residues 11-35 (EQERDADEEERRDEPNESNVEVEKR) is cleaved from the precursor. Phe48 carries the phenylalanine amide modification.

This sequence belongs to the frog skin active peptide (FSAP) family. Temporin subfamily. Expressed by the skin glands.

It is found in the secreted. It localises to the target cell membrane. Functionally, amphipathic alpha-helical antimicrobial peptide with highly potent activity against Gram-positive bacteria, and potent activity Gram-negative bacteria and fungi (MIC=2-30 uM). Acts through membranolytic mechanism involving rapid membrane permeabilization and depolarization. Shows a direct extra-cellular antiviral activity probably through degradation of the viral envelope. Also shows a weak indirect antiviral activity by inhibiting virus replication. Also displays anti-trypanosoma and anti-leishmania (prosmastigotes and axenic amastigotes) activity through membranolytic mechanism. Also induces apoptosis in leishmania promastigotes at high peptide concentrations. Shows moderate hemolytic activity (LC(50)=25 uM). In contrast to many antibiotics, this peptide does not induce bacterial resistance. The sequence is that of Temporin-SHa from Pelophylax saharicus (Sahara frog).